A 672-amino-acid polypeptide reads, in one-letter code: MKRGVWLLIYCYATLTKGFSLPGLSPTTYHSGDEIPLLVNRLTPSIYFQHQDEEGNDVSGDKEHFLYSYDYYNKRFHFCRPEHVEKQPESLGSVIFGDRIYNSPFQLNMLEEKECVALCKSTIPGKDAKFINTLIKSGFFQNWLVDGLPAARKAYDSRTKTNYYGTGFELGFTDVKQTVDGKAVPSTMEELTSEASNEDVILDARLPKNVKPNLVKTVELPYFVNHFDIEVEFHDRGNDNYRVVGVIVNPVSIERSSPGACSTTGKPLILDEDKDNEVYFTYSVKFVASDTVWATRWDKYLHIYDPQIQWFSLINFSVIVILLSSVVMHSLLRALKSDLARYNELNLDNEFHEDSGWKLGHGDVFRTPSKSMLLSILVGSGMQLFLMVMCSIFFAAVGLVSPVSRGSLPTVMFVLYALFGFVGSYASMGVYKFFRGPYWKANMILTPILLPGAIFLLIVIMNFFLLFAHSSGVIPARSLFFIILLWFLVSVPLSFAGSIVAHKQCNWDEHPTKTNQIARQIPYQPWYLRTAQATLIAGIFSFGSIAVELYFIYSSLWFNKIFYMFGFLLFSFLLLTLTTSLVTILITYYSLCLENWLWQWRSFIIGGLGCSIYTFIHSILFTKFKLGGVITVVLYLGYSLIISALCCVVTGAIGFFSSMFFIRKIYSAIKVE.

The N-terminal stretch at 1–18 (MKRGVWLLIYCYATLTKG) is a signal peptide. Topologically, residues 19–307 (FSLPGLSPTT…DKYLHIYDPQ (289 aa)) are extracellular. The chain crosses the membrane as a helical span at residues 308 to 328 (IQWFSLINFSVIVILLSSVVM). The Cytoplasmic segment spans residues 329-383 (HSLLRALKSDLARYNELNLDNEFHEDSGWKLGHGDVFRTPSKSMLLSILVGSGMQ). The chain crosses the membrane as a helical span at residues 384 to 404 (LFLMVMCSIFFAAVGLVSPVS). Residues 405–410 (RGSLPT) lie on the Extracellular side of the membrane. The helical transmembrane segment at 411-431 (VMFVLYALFGFVGSYASMGVY) threads the bilayer. At 432-447 (KFFRGPYWKANMILTP) the chain is on the cytoplasmic side. Residues 448–468 (ILLPGAIFLLIVIMNFFLLFA) traverse the membrane as a helical segment. The Extracellular segment spans residues 469–479 (HSSGVIPARSL). A helical membrane pass occupies residues 480–500 (FFIILLWFLVSVPLSFAGSIV). Residues 501–532 (AHKQCNWDEHPTKTNQIARQIPYQPWYLRTAQ) lie on the Cytoplasmic side of the membrane. The chain crosses the membrane as a helical span at residues 533–553 (ATLIAGIFSFGSIAVELYFIY). The Extracellular portion of the chain corresponds to 554 to 565 (SSLWFNKIFYMF). A helical membrane pass occupies residues 566–586 (GFLLFSFLLLTLTTSLVTILI). Residues 587 to 601 (TYYSLCLENWLWQWR) are Cytoplasmic-facing. The chain crosses the membrane as a helical span at residues 602–622 (SFIIGGLGCSIYTFIHSILFT). The Extracellular segment spans residues 623 to 628 (KFKLGG). Residues 629 to 649 (VITVVLYLGYSLIISALCCVV) traverse the membrane as a helical segment. Over 650–672 (TGAIGFFSSMFFIRKIYSAIKVE) the chain is Cytoplasmic.

It belongs to the nonaspanin (TM9SF) (TC 9.A.2) family.

Its subcellular location is the vacuole membrane. Its function is as follows. With EMP70 and TMN3, plays a critical role in the late stages of a nutrient-controlled pathway notably regulating FLO11 gene expression. Acts downstream of RAS2 and TOR. Essential for cell adhesion and filamentous growth. May play a role as effector of cellular copper homeostasis. In Saccharomyces cerevisiae (strain ATCC 204508 / S288c) (Baker's yeast), this protein is Transmembrane 9 superfamily member 2 (TMN2).